The sequence spans 358 residues: Glycerol-3-phosphate dehydrogenase [NAD(P)+] (358 aa).

Residues serine 33, phenylalanine 34, arginine 54, and lysine 128 each contribute to the NADPH site. Sn-glycerol 3-phosphate is bound by residues lysine 128 and glycine 156. Alanine 160 is an NADPH binding site. Sn-glycerol 3-phosphate-binding residues include lysine 211, aspartate 264, serine 274, arginine 275, and asparagine 276. Lysine 211 serves as the catalytic Proton acceptor. Arginine 275 provides a ligand contact to NADPH. Valine 299 and glutamate 301 together coordinate NADPH.

Belongs to the NAD-dependent glycerol-3-phosphate dehydrogenase family.

It is found in the cytoplasm. It carries out the reaction sn-glycerol 3-phosphate + NAD(+) = dihydroxyacetone phosphate + NADH + H(+). The enzyme catalyses sn-glycerol 3-phosphate + NADP(+) = dihydroxyacetone phosphate + NADPH + H(+). It participates in membrane lipid metabolism; glycerophospholipid metabolism. In terms of biological role, catalyzes the reduction of the glycolytic intermediate dihydroxyacetone phosphate (DHAP) to sn-glycerol 3-phosphate (G3P), the key precursor for phospholipid synthesis. This is Glycerol-3-phosphate dehydrogenase [NAD(P)+] from Saccharophagus degradans (strain 2-40 / ATCC 43961 / DSM 17024).